The primary structure comprises 559 residues: Leucine-rich repeat protein soc-2 (559 aa).

The segment covering 1–17 (METSKEFEFRPAKETSR) has biased composition (basic and acidic residues). A disordered region spans residues 1–55 (METSKEFEFRPAKETSRSKSPGGIVGRLSNFARNKARHSLSEKGSNSVGGSGGSG). LRR repeat units lie at residues 74 to 95 (QDQR…IKEL), 97 to 118 (QLTE…IGQL), 120 to 141 (NLKK…LSSL), 143 to 164 (SLET…IYKI), 166 to 187 (SLET…IGNL), 189 to 210 (KLKM…IGKL), 212 to 233 (SLVV…IGEC), 235 to 257 (ALTQ…GKLT), 258 to 279 (NLVR…LESC), 281 to 302 (QLEE…LLTM), 305 to 326 (KIHT…GPQQ), 329 to 350 (PTVT…IFSK), 353 to 374 (RLTK…MGSW), 376 to 397 (SITE…IEKL), 399 to 420 (NLEI…IGNL), 422 to 443 (KLRE…IGFL), 445 to 466 (HLTK…IGNL), 468 to 489 (SLQD…IGHL), 491 to 513 (SLKS…LALC), and 515 to 536 (SLEI…ITAG).

Belongs to the SHOC2 family. Interacts with let-60.

Functionally, acts as a Ras effector and participates in MAPK pathway activation. Probably acts as a scaffolding protein in a protein phosphatase complex that specifically dephosphorylates Raf kinase and stimulates Raf activity at specialized signaling complexes upon Ras activation. Required for vulval development. Involved in fluid homeostasis. Plays a role in nicotinic acetylcholine receptor (nAChR)-mediated sensitivity to nicotine. The sequence is that of Leucine-rich repeat protein soc-2 (soc-2) from Caenorhabditis briggsae.